The sequence spans 502 residues: Sodium/proline symporter (502 aa).

The Periplasmic portion of the chain corresponds to 1–5 (MAIST). Residues 6–26 (PMLVTFCVYIFGMILIGFIAW) traverse the membrane as a helical segment. At 27–41 (RSTKNFDDYILGGRS) the chain is on the cytoplasmic side. 2 hydrophilic regions span residues 27–66 (RSTK…GLPG) and 88–124 (INWK…KSRI). A helical membrane pass occupies residues 42 to 62 (LGPFVTALSAGASDMSGWLLM). Residues 63–67 (GLPGA) lie on the Periplasmic side of the membrane. Residues 68 to 88 (VFLSGISESWIAIGLTLGAWI) traverse the membrane as a helical segment. Over 89 to 126 (NWKLVAGRLRVHTEYNNNALTLPDYFTGRFEDKSRILR) the chain is Cytoplasmic. Residues 127-147 (IISALVILLFFTIYCASGIVA) traverse the membrane as a helical segment. Residues 148–162 (GARLFESTFGMSYET) lie on the Periplasmic side of the membrane. Positions 151 to 162 (LFESTFGMSYET) are hydrophilic. The helical transmembrane segment at 163 to 183 (ALWAGAAATILYTFIGGFLAV) threads the bilayer. Over 184-192 (SWTDTVQAS) the chain is Cytoplasmic. Positions 185–189 (WTDTV) are hydrophilic. The chain crosses the membrane as a helical span at residues 193–213 (LMIFALILTPVIVIISVGGFG). Hydrophilic stretches follow at residues 214 to 231 (DSLE…DMLK), 249 to 274 (FGQP…RRIS), and 296 to 319 (FNDH…ELAQ). The Periplasmic segment spans residues 214 to 234 (DSLEVIKQKSIENVDMLKGLN). The chain crosses the membrane as a helical span at residues 235-255 (FVAIISLMGWGLGYFGQPHIL). Topologically, residues 256-275 (ARFMAADSHHSIVHARRISM) are cytoplasmic. Residues 276–296 (TWMILCLAGAVAVGFFGIAYF) form a helical membrane-spanning segment. Topologically, residues 297-319 (NDHPALAGAVNQNAERVFIELAQ) are periplasmic. A helical transmembrane segment spans residues 320-340 (ILFNPWIAGILLSAILAAVMS). Residues 341 to 370 (TLSCQLLVCSSAITEDLYKAFLRKHASQKE) lie on the Cytoplasmic side of the membrane. The segment at 341-370 (TLSCQLLVCSSAITEDLYKAFLRKHASQKE) is hydrophilic. Residues 371–391 (LVWVGRVMVLVVALVAIALAA) traverse the membrane as a helical segment. The Periplasmic portion of the chain corresponds to 392 to 397 (NPENRV). Residues 392–397 (NPENRV) form a hydrophilic region. The chain crosses the membrane as a helical span at residues 398-418 (LGLVSYAWAGFGAAFGPVVLF). The Cytoplasmic portion of the chain corresponds to 419–427 (SVMWSRMTR). Hydrophilic stretches follow at residues 424 to 430 (RMTRNGA) and 446 to 448 (QFG). 2 helical membrane-spanning segments follow: residues 428-448 (NGAL…KQFG) and 449-469 (WLGL…IVVF). The Cytoplasmic segment spans residues 470–502 (SLLGKAPSAAMQKRFAEADAHYHSAPPSRLQES). Residues 476–502 (PSAAMQKRFAEADAHYHSAPPSRLQES) form a hydrophilic region.

The protein belongs to the sodium:solute symporter (SSF) (TC 2.A.21) family. Has been isolated from inner membrane preparations as a homodimer.

It is found in the cell inner membrane. The catalysed reaction is L-proline(in) + Na(+)(in) = L-proline(out) + Na(+)(out). Its activity is regulated as follows. Activity is stimulated by phosphatidylethanolamine and phosphatidylglycerol, but not by phosphatidylcholine and cardiolipin. Proline uptake is inhibited by the sulfhydryl reagent N-ethylmaleimide (NEM). Proline, in the presence of Na(+) or Li(+), protects the carrier functions from NEM-inactivation. Functionally, catalyzes the sodium-dependent uptake of extracellular L-proline. This protein is also capable of using lithium as the transport cation. Also catalyzes the uptake of propionate. The chain is Sodium/proline symporter (putP) from Escherichia coli (strain K12).